Reading from the N-terminus, the 305-residue chain is tRNA pseudouridine synthase B (305 aa).

Asp48 (nucleophile) is an active-site residue.

It belongs to the pseudouridine synthase TruB family. Type 1 subfamily.

The enzyme catalyses uridine(55) in tRNA = pseudouridine(55) in tRNA. Functionally, responsible for synthesis of pseudouridine from uracil-55 in the psi GC loop of transfer RNAs. The sequence is that of tRNA pseudouridine synthase B from Stutzerimonas stutzeri (strain A1501) (Pseudomonas stutzeri).